A 312-amino-acid chain; its full sequence is Methionyl-tRNA formyltransferase (312 aa).

109-112 (SLLP) serves as a coordination point for (6S)-5,6,7,8-tetrahydrofolate.

The protein belongs to the Fmt family.

It carries out the reaction L-methionyl-tRNA(fMet) + (6R)-10-formyltetrahydrofolate = N-formyl-L-methionyl-tRNA(fMet) + (6S)-5,6,7,8-tetrahydrofolate + H(+). In terms of biological role, attaches a formyl group to the free amino group of methionyl-tRNA(fMet). The formyl group appears to play a dual role in the initiator identity of N-formylmethionyl-tRNA by promoting its recognition by IF2 and preventing the misappropriation of this tRNA by the elongation apparatus. This Caulobacter sp. (strain K31) protein is Methionyl-tRNA formyltransferase.